The following is a 155-amino-acid chain: MNIRIGQGFDSHKLKTKKNSRVFLGGIPVRTDQQLIANSDGDVVLHALSDAVLGCGSFGDIGMYFDENDLSNKGLDSKTILNYCLKLIKKLKLEFVNIDLTIFAQDIRIDPIRFEIKSSLMKLTGCNSVNVKAKSYEEPKNEIACSCVVLMNTNK.

A divalent metal cation is bound by residues aspartate 10, histidine 12, and histidine 46. Position 10–12 (10–12 (DSH)) interacts with 4-CDP-2-C-methyl-D-erythritol 2-phosphate. Residues 60-62 (DIG), 65-69 (FDEND), and lysine 140 contribute to the 4-CDP-2-C-methyl-D-erythritol 2-phosphate site.

The protein belongs to the IspF family. As to quaternary structure, homotrimer. A divalent metal cation serves as cofactor.

It catalyses the reaction 4-CDP-2-C-methyl-D-erythritol 2-phosphate = 2-C-methyl-D-erythritol 2,4-cyclic diphosphate + CMP. Its pathway is isoprenoid biosynthesis; isopentenyl diphosphate biosynthesis via DXP pathway; isopentenyl diphosphate from 1-deoxy-D-xylulose 5-phosphate: step 4/6. Functionally, involved in the biosynthesis of isopentenyl diphosphate (IPP) and dimethylallyl diphosphate (DMAPP), two major building blocks of isoprenoid compounds. Catalyzes the conversion of 4-diphosphocytidyl-2-C-methyl-D-erythritol 2-phosphate (CDP-ME2P) to 2-C-methyl-D-erythritol 2,4-cyclodiphosphate (ME-CPP) with a corresponding release of cytidine 5-monophosphate (CMP). In Mycoplasmoides gallisepticum (strain R(low / passage 15 / clone 2)) (Mycoplasma gallisepticum), this protein is 2-C-methyl-D-erythritol 2,4-cyclodiphosphate synthase.